The sequence spans 635 residues: Cell pattern formation-associated protein stuA (635 aa).

Disordered regions lie at residues Met-1–Tyr-21 and Ser-63–Gln-82. In terms of domain architecture, HTH APSES-type spans Arg-129–Pro-235. Residues Gly-163 to Glu-184 constitute a DNA-binding region (H-T-H motif). 2 disordered regions span residues Gln-246–Ser-480 and Ser-498–Arg-635. 2 stretches are compositionally biased toward low complexity: residues Met-276–Pro-294 and Ser-312–Ser-325. The segment covering Tyr-326 to Met-355 has biased composition (polar residues). Low complexity predominate over residues Pro-356–Tyr-380. The span at Ala-460–Gln-469 shows a compositional bias: basic and acidic residues. Polar residues-rich tracts occupy residues Ser-498–Ser-513 and Ala-539–Thr-571. The interval Lys-582 to Arg-605 is nuclear localization domain. Positions Arg-583–Arg-592 are enriched in basic and acidic residues.

Belongs to the EFG1/PHD1/stuA family.

In terms of biological role, transcription factor that regulates asexual reproduction. Binds the StuA-response elements (StRE) with the consensus sequence 5'-(A/T)CGCG(T/A)N(A/C)-3' at the promoters of target genes. Controls the expression of 6 secondary metabolite biosynthetic clusters including 2 involved in the synthesis of alkaloids (fumigaclavine and fumitremorgen), 2 clusters of the ETP class (gliotoxin and an unknown ETP-like toxin), a cluster predicted to produce pseurotin A, and the product of the last cluster is unknown. Controls the production of ergot alkaloids during conidiophore development. Controls expression of sspA and gliP. Involved in the induction of immunoglobulin E-independent mast cell degranulation. The polypeptide is Cell pattern formation-associated protein stuA (Aspergillus fumigatus (strain ATCC MYA-4609 / CBS 101355 / FGSC A1100 / Af293) (Neosartorya fumigata)).